A 396-amino-acid polypeptide reads, in one-letter code: Phosphopentomutase (396 aa).

Residues D13, D288, H293, D329, H330, and H341 each contribute to the Mn(2+) site.

The protein belongs to the phosphopentomutase family. Requires Mn(2+) as cofactor.

It localises to the cytoplasm. The enzyme catalyses 2-deoxy-alpha-D-ribose 1-phosphate = 2-deoxy-D-ribose 5-phosphate. It carries out the reaction alpha-D-ribose 1-phosphate = D-ribose 5-phosphate. Its pathway is carbohydrate degradation; 2-deoxy-D-ribose 1-phosphate degradation; D-glyceraldehyde 3-phosphate and acetaldehyde from 2-deoxy-alpha-D-ribose 1-phosphate: step 1/2. Its function is as follows. Isomerase that catalyzes the conversion of deoxy-ribose 1-phosphate (dRib-1-P) and ribose 1-phosphate (Rib-1-P) to deoxy-ribose 5-phosphate (dRib-5-P) and ribose 5-phosphate (Rib-5-P), respectively. The sequence is that of Phosphopentomutase from Clostridium botulinum (strain Alaska E43 / Type E3).